A 96-amino-acid polypeptide reads, in one-letter code: Neutrophil defensin 3 (96 aa).

An N-terminal signal peptide occupies residues 1-19; that stretch reads MRTLVILAAILLVALQAQA. Positions 20-66 are excised as a propeptide; that stretch reads EPLQARTDEATAAQEQIPTDNPEVVVSLAWDESLAPKDSVPGLRKNM. 3 disulfide bridges follow: Cys-68–Cys-96, Cys-70–Cys-85, and Cys-75–Cys-95.

The protein localises to the secreted. In terms of biological role, has bacteriostatic activity against Gram-positive bacteria S.aureus and L.monocytogenes and Gram-negative bacterium E.coli and antifungal activity against C.neoformans. The sequence is that of Neutrophil defensin 3 from Macaca mulatta (Rhesus macaque).